The primary structure comprises 687 residues: Polyphosphate kinase (687 aa).

N45 is an ATP binding site. Mg(2+) is bound by residues R375 and R405. H435 (phosphohistidine intermediate) is an active-site residue. ATP contacts are provided by Y472, R568, and H596.

This sequence belongs to the polyphosphate kinase 1 (PPK1) family. Requires Mg(2+) as cofactor. Post-translationally, an intermediate of this reaction is the autophosphorylated ppk in which a phosphate is covalently linked to a histidine residue through a N-P bond.

The enzyme catalyses [phosphate](n) + ATP = [phosphate](n+1) + ADP. Catalyzes the reversible transfer of the terminal phosphate of ATP to form a long-chain polyphosphate (polyP). The sequence is that of Polyphosphate kinase from Paraburkholderia phytofirmans (strain DSM 17436 / LMG 22146 / PsJN) (Burkholderia phytofirmans).